Here is a 249-residue protein sequence, read N- to C-terminus: MEIFSVDWTGQTPPHIPRKSLPRHVAVVMDGNGRWANQRNLPRIEGHKAGESALIDVVAGAVQVGVPYLSLYVFSTENWLRAPDEVRFLLRFTRDVIARRRELFAHWGVRVRWSGVPNRLGKVLVKELRDTEEITKKNTAMNLNVCLNYGSRQEIVNAIKSIVSDVNSGLISAKSVNEKIISRRMYMPDFPDVDLFLRSSGENRMSNFMLWQSAYAELIFMSKLWPDFRRDDFWAALRAYSGRSRRFGR.

Asp30 is a catalytic residue. Asp30 lines the Mg(2+) pocket. Substrate contacts are provided by residues 31 to 34 (GNGR), Trp35, Arg43, His47, and 75 to 77 (STE). Asn78 serves as the catalytic Proton acceptor. Substrate is bound by residues Trp79, Arg81, Arg198, and 204–206 (RMS). A Mg(2+)-binding site is contributed by Glu217.

Belongs to the UPP synthase family. In terms of assembly, homodimer. It depends on Mg(2+) as a cofactor.

In terms of biological role, catalyzes the condensation of isopentenyl diphosphate (IPP) with allylic pyrophosphates generating different type of terpenoids. The protein is Isoprenyl transferase 1 of Tropheryma whipplei (strain Twist) (Whipple's bacillus).